The chain runs to 870 residues: Outer membrane usher protein FimD (870 aa).

The first 27 residues, 1-27, serve as a signal peptide directing secretion; the sequence is MKKTTWFAGRFPGYVSPLSSVALSVLA. Residues C843 and C865 are joined by a disulfide bond.

This sequence belongs to the fimbrial export usher family.

The protein localises to the cell outer membrane. Involved in the export and assembly of FimA fimbrial subunits across the outer membrane. In Salmonella typhimurium (strain LT2 / SGSC1412 / ATCC 700720), this protein is Outer membrane usher protein FimD (fimD).